A 433-amino-acid chain; its full sequence is GTPase Obg (433 aa).

The region spanning 1 to 159 (MKFVDSADLI…FEIRAELKVL (159 aa)) is the Obg domain. Residues 160 to 332 (ADVGFVGLPN…LLFMIYEELK (173 aa)) form the OBG-type G domain. GTP-binding positions include 166 to 173 (GLPNAGKS), 191 to 195 (FTTIT), 213 to 216 (DLPG), 284 to 287 (NKMD), and 313 to 315 (SGL). Mg(2+) is bound by residues S173 and T193. Residues 355–433 (KFEEQKEDIQ…VFDYELEWTD (79 aa)) form the OCT domain.

It belongs to the TRAFAC class OBG-HflX-like GTPase superfamily. OBG GTPase family. Monomer. The cofactor is Mg(2+).

Its subcellular location is the cytoplasm. In terms of biological role, an essential GTPase which binds GTP, GDP and possibly (p)ppGpp with moderate affinity, with high nucleotide exchange rates and a fairly low GTP hydrolysis rate. Plays a role in control of the cell cycle, stress response, ribosome biogenesis and in those bacteria that undergo differentiation, in morphogenesis control. This is GTPase Obg from Mycoplasma mycoides subsp. mycoides SC (strain CCUG 32753 / NCTC 10114 / PG1).